A 653-amino-acid polypeptide reads, in one-letter code: tRNA-guanine(15) transglycosylase (653 aa).

Asp-91 serves as the catalytic Nucleophile. Residues Asp-126 and Ala-193 each coordinate substrate. The Zn(2+) site is built by Cys-276, Cys-278, and Cys-281. The PUA domain maps to 578 to 653 (AWRVAVNEES…QAVKTRKGGF (76 aa)).

The protein belongs to the archaeosine tRNA-ribosyltransferase family. Requires Zn(2+) as cofactor.

The enzyme catalyses guanosine(15) in tRNA + 7-cyano-7-deazaguanine = 7-cyano-7-carbaguanosine(15) in tRNA + guanine. It participates in tRNA modification; archaeosine-tRNA biosynthesis. Exchanges the guanine residue with 7-cyano-7-deazaguanine (preQ0) at position 15 in the dihydrouridine loop (D-loop) of archaeal tRNAs. The chain is tRNA-guanine(15) transglycosylase from Methanothermobacter thermautotrophicus (strain ATCC 29096 / DSM 1053 / JCM 10044 / NBRC 100330 / Delta H) (Methanobacterium thermoautotrophicum).